The following is a 163-amino-acid chain: Cyclic pyranopterin monophosphate synthase (163 aa).

Substrate contacts are provided by residues 74–76 (MCH) and 111–112 (ME). Residue Asp126 is part of the active site.

Belongs to the MoaC family. Homohexamer; trimer of dimers.

The catalysed reaction is (8S)-3',8-cyclo-7,8-dihydroguanosine 5'-triphosphate = cyclic pyranopterin phosphate + diphosphate. It functions in the pathway cofactor biosynthesis; molybdopterin biosynthesis. Its function is as follows. Catalyzes the conversion of (8S)-3',8-cyclo-7,8-dihydroguanosine 5'-triphosphate to cyclic pyranopterin monophosphate (cPMP). This chain is Cyclic pyranopterin monophosphate synthase, found in Desulfitobacterium hafniense (strain DSM 10664 / DCB-2).